We begin with the raw amino-acid sequence, 240 residues long: Putative exosome complex component RRP41 (240 aa).

It belongs to the RNase PH family. As to quaternary structure, component of the RNA exosome complex.

It is found in the cytoplasm. It localises to the nucleus. Its subcellular location is the nucleolus. The protein resides in the nucleoplasm. In terms of biological role, non-catalytic component of the RNA exosome complex which has 3'-&gt;5' exoribonuclease activity and participates in a multitude of cellular RNA processing and degradation events. The protein is Putative exosome complex component RRP41 (exos-4.1) of Caenorhabditis briggsae.